The following is a 296-amino-acid chain: 4-diphosphocytidyl-2-C-methyl-D-erythritol kinase (296 aa).

Lysine 18 is a catalytic residue. ATP is bound at residue 102-112 (PMGGGIGGGSS). The active site involves aspartate 144.

Belongs to the GHMP kinase family. IspE subfamily.

It carries out the reaction 4-CDP-2-C-methyl-D-erythritol + ATP = 4-CDP-2-C-methyl-D-erythritol 2-phosphate + ADP + H(+). Its pathway is isoprenoid biosynthesis; isopentenyl diphosphate biosynthesis via DXP pathway; isopentenyl diphosphate from 1-deoxy-D-xylulose 5-phosphate: step 3/6. Catalyzes the phosphorylation of the position 2 hydroxy group of 4-diphosphocytidyl-2C-methyl-D-erythritol. In Vibrio atlanticus (strain LGP32) (Vibrio splendidus (strain Mel32)), this protein is 4-diphosphocytidyl-2-C-methyl-D-erythritol kinase.